The following is a 154-amino-acid chain: Small ribosomal subunit protein uS19B (154 aa).

Serine 63 is subject to Phosphoserine.

Belongs to the universal ribosomal protein uS19 family. In terms of assembly, component of the small ribosomal subunit (SSU). Mature yeast ribosomes consist of a small (40S) and a large (60S) subunit. The 40S small subunit contains 1 molecule of ribosomal RNA (18S rRNA) and at least 33 different proteins. The large 60S subunit contains 3 rRNA molecules (25S, 5.8S and 5S rRNA) and at least 46 different proteins.

The protein resides in the cytoplasm. The protein localises to the nucleus. Its subcellular location is the nucleolus. In terms of biological role, component of the ribosome, a large ribonucleoprotein complex responsible for the synthesis of proteins in the cell. The small ribosomal subunit (SSU) binds messenger RNAs (mRNAs) and translates the encoded message by selecting cognate aminoacyl-transfer RNA (tRNA) molecules. The large subunit (LSU) contains the ribosomal catalytic site termed the peptidyl transferase center (PTC), which catalyzes the formation of peptide bonds, thereby polymerizing the amino acids delivered by tRNAs into a polypeptide chain. The nascent polypeptides leave the ribosome through a tunnel in the LSU and interact with protein factors that function in enzymatic processing, targeting, and the membrane insertion of nascent chains at the exit of the ribosomal tunnel. uS19 is involved in the nuclear export of the small ribosomal subunit precursor. Has a role in the late stage of the assembly of pre-40S particles within the nucleus and controls their export to the cytoplasm. The chain is Small ribosomal subunit protein uS19B (rps1502) from Schizosaccharomyces pombe (strain 972 / ATCC 24843) (Fission yeast).